The primary structure comprises 372 residues: Glutamate 5-kinase (372 aa).

Residue Lys-14 participates in ATP binding. Positions 54, 141, and 153 each coordinate substrate. 173 to 174 (TD) contacts ATP. Residues 280–358 (RGTLVLDDGA…EAIVRELGYM (79 aa)) form the PUA domain.

Belongs to the glutamate 5-kinase family.

The protein localises to the cytoplasm. The catalysed reaction is L-glutamate + ATP = L-glutamyl 5-phosphate + ADP. It participates in amino-acid biosynthesis; L-proline biosynthesis; L-glutamate 5-semialdehyde from L-glutamate: step 1/2. Catalyzes the transfer of a phosphate group to glutamate to form L-glutamate 5-phosphate. This chain is Glutamate 5-kinase, found in Pseudomonas syringae pv. tomato (strain ATCC BAA-871 / DC3000).